The chain runs to 304 residues: Acetylglutamate kinase (304 aa).

Residues 82-83 (GG), arginine 104, and asparagine 197 contribute to the substrate site.

This sequence belongs to the acetylglutamate kinase family. ArgB subfamily.

Its subcellular location is the cytoplasm. It catalyses the reaction N-acetyl-L-glutamate + ATP = N-acetyl-L-glutamyl 5-phosphate + ADP. Its pathway is amino-acid biosynthesis; L-arginine biosynthesis; N(2)-acetyl-L-ornithine from L-glutamate: step 2/4. Functionally, catalyzes the ATP-dependent phosphorylation of N-acetyl-L-glutamate. The polypeptide is Acetylglutamate kinase (Prochlorococcus marinus (strain NATL2A)).